The following is a 64-amino-acid chain: Beta-toxin Tf1 (64 aa).

The 62-residue stretch at 1 to 62 folds into the LCN-type CS-alpha/beta domain; it reads KEGYLMDHEG…VWERATNRCG (62 aa). 4 disulfides stabilise this stretch: C11–C61, C15–C37, C23–C42, and C27–C44. C61 is modified (cysteine amide).

It belongs to the long (4 C-C) scorpion toxin superfamily. Sodium channel inhibitor family. Beta subfamily. In terms of tissue distribution, expressed by the venom gland.

It localises to the secreted. Beta toxins bind voltage-independently at site-4 of sodium channels (Nav) and shift the voltage of activation toward more negative potentials thereby affecting sodium channel activation and promoting spontaneous and repetitive firing. In Tityus fasciolatus (Central Brazilian scorpion), this protein is Beta-toxin Tf1.